We begin with the raw amino-acid sequence, 230 residues long: MGKVRGLRARVHQAAVRPKGEAAPGPAPPAPEATPPPASAAGKDWAFINTNIFARTKIDPSALVQKLELDVRSVTSVRRGEAGSSARSVPSIRRGAEAKTVLPKKEKMKLRREQWLQKIEAIKLAEQKHREERRRRATVVVGDLHPLRDALPELLGLEAGSRRQARSRESNKPRPSELSRMSAAQRQQLLEEERTRFQELLASPAYRASPLVAIGQTLARQMQLEDGGQL.

A compositionally biased stretch (basic residues) spans 1-11 (MGKVRGLRARV). Disordered stretches follow at residues 1–42 (MGKV…SAAG) and 155–187 (LGLEAGSRRQARSRESNKPRPSELSRMSAAQRQ). Positions 25-38 (GPAPPAPEATPPPA) are enriched in pro residues. T34 bears the Phosphothreonine mark. Residues 166 to 177 (RSRESNKPRPSE) are compositionally biased toward basic and acidic residues. S203 is subject to Phosphoserine.

Belongs to the SLX9 family. In terms of tissue distribution, not detected in any tested tissue.

The protein resides in the nucleus. It is found in the nucleolus. Its function is as follows. May be involved in ribosome biogenesis. In Homo sapiens (Human), this protein is Ribosome biogenesis protein SLX9 homolog.